Here is a 394-residue protein sequence, read N- to C-terminus: DNA replication and repair protein RecF (394 aa).

An ATP-binding site is contributed by 30 to 37 (GSNGQGKT).

The protein belongs to the RecF family.

The protein resides in the cytoplasm. In terms of biological role, the RecF protein is involved in DNA metabolism; it is required for DNA replication and normal SOS inducibility. RecF binds preferentially to single-stranded, linear DNA. It also seems to bind ATP. The protein is DNA replication and repair protein RecF of Cutibacterium acnes (strain DSM 16379 / KPA171202) (Propionibacterium acnes).